The chain runs to 242 residues: Uridylate kinase (242 aa).

8-11 contacts ATP; it reads KFSG. Residue Gly50 participates in UMP binding. ATP is bound by residues Gly51 and Arg55. UMP is bound by residues Asp71 and 132–139; that span reads TGNPFFTT. Positions 159, 165, and 168 each coordinate ATP.

Belongs to the UMP kinase family. In terms of assembly, homohexamer.

The protein localises to the cytoplasm. It carries out the reaction UMP + ATP = UDP + ADP. The protein operates within pyrimidine metabolism; CTP biosynthesis via de novo pathway; UDP from UMP (UMPK route): step 1/1. With respect to regulation, inhibited by UTP. In terms of biological role, catalyzes the reversible phosphorylation of UMP to UDP. This Nitratiruptor sp. (strain SB155-2) protein is Uridylate kinase.